Consider the following 277-residue polypeptide: NADPH-dependent 7-cyano-7-deazaguanine reductase (277 aa).

83–85 contacts substrate; it reads VES. NADPH is bound at residue 85-86; sequence SK. Cysteine 184 serves as the catalytic Thioimide intermediate. Residue aspartate 191 is the Proton donor of the active site. Residue 223–224 participates in substrate binding; sequence HE. 252–253 serves as a coordination point for NADPH; the sequence is RG.

It belongs to the GTP cyclohydrolase I family. QueF type 2 subfamily. As to quaternary structure, homodimer.

It is found in the cytoplasm. It carries out the reaction 7-aminomethyl-7-carbaguanine + 2 NADP(+) = 7-cyano-7-deazaguanine + 2 NADPH + 3 H(+). It functions in the pathway tRNA modification; tRNA-queuosine biosynthesis. Catalyzes the NADPH-dependent reduction of 7-cyano-7-deazaguanine (preQ0) to 7-aminomethyl-7-deazaguanine (preQ1). The polypeptide is NADPH-dependent 7-cyano-7-deazaguanine reductase (Ralstonia nicotianae (strain ATCC BAA-1114 / GMI1000) (Ralstonia solanacearum)).